The sequence spans 307 residues: Myeloid-associated differentiation marker homolog (307 aa).

MARVEL domains follow at residues 15–148 (TLKS…AKPG) and 153–304 (YMAT…RLIF). Transmembrane regions (helical) follow at residues 19–39 (PVGI…SLVV), 51–71 (LCMF…IVEF), 85–105 (FPIT…VIYP), 123–143 (IVAI…VSLT), 156–176 (TTPG…FVFI), 190–210 (WCLA…ILCV), 228–248 (YALL…IFSF), and 278–298 (MVAV…DLVY).

This sequence belongs to the MAL family.

The protein localises to the membrane. The sequence is that of Myeloid-associated differentiation marker homolog (myadm) from Xenopus laevis (African clawed frog).